Reading from the N-terminus, the 159-residue chain is Ribosome maturation factor RimP (159 aa).

Belongs to the RimP family.

The protein resides in the cytoplasm. Its function is as follows. Required for maturation of 30S ribosomal subunits. The sequence is that of Ribosome maturation factor RimP from Lacticaseibacillus casei (strain BL23) (Lactobacillus casei).